We begin with the raw amino-acid sequence, 92 residues long: uncharacterized protein (92 aa).

The next 3 helical transmembrane spans lie at 1–21, 29–49, and 51–71; these read MEVL…GVIL, IIML…CYYL, and IAIV…LGYL.

Its subcellular location is the cell membrane. This is an uncharacterized protein from Methanocaldococcus jannaschii (strain ATCC 43067 / DSM 2661 / JAL-1 / JCM 10045 / NBRC 100440) (Methanococcus jannaschii).